We begin with the raw amino-acid sequence, 531 residues long: Zinc finger C2HC domain-containing protein 1C (531 aa).

Residues 16–45 (MLPHNTTEAPGPHSAKQDSYEQSDSSQQSL) are disordered. A compositionally biased stretch (low complexity) spans 35–44 (YEQSDSSQQS). Positions 209–264 (VQIRRLEAAGESLEEEIRRKQILLRGKLKKTEEELRRIQTQKEQAKENENRELQKI) form a coiled coil. Disordered regions lie at residues 290–318 (FEEE…QLSD) and 334–387 (NKIR…PQLG). Over residues 293–305 (EFSRDKREDETWE) the composition is skewed to basic and acidic residues. A compositionally biased stretch (polar residues) spans 306 to 315 (RSQQNSSPFQ). Positions 335 to 345 (KIRDRVSEPSM) are enriched in basic and acidic residues. Positions 366 to 380 (SSLSMAPDSSGSSGS) are enriched in low complexity. 2 C2HC/C3H-type zinc fingers span residues 385–414 (QLGE…MQGS) and 493–522 (DYIQ…IKNR). Zn(2+) contacts are provided by C389, C392, H404, C408, C497, C500, H512, and C516.

Belongs to the ZC2HC1 family. Zn(2+) serves as cofactor.

The protein is Zinc finger C2HC domain-containing protein 1C (ZC2HC1C) of Macaca fascicularis (Crab-eating macaque).